Here is a 926-residue protein sequence, read N- to C-terminus: Storkhead-box protein 2 (926 aa).

6 disordered regions span residues Met1–Lys32, Glu338–Gly394, Glu452–Asp529, Gly632–Lys693, Leu724–Gln803, and Leu825–Val926. A compositionally biased stretch (basic and acidic residues) spans Phe18–Lys32. Residues His353–Val378 are compositionally biased toward basic residues. Residues Ser379–Gly394 are compositionally biased toward basic and acidic residues. Positions Ser463–Ser472 are enriched in basic residues. Over residues His473 to Asp495 the composition is skewed to basic and acidic residues. The segment covering Gln518–Asp529 has biased composition (polar residues). Basic and acidic residues-rich tracts occupy residues Gly632–Pro658 and His684–Lys693. The span at Leu746–Asp772 shows a compositional bias: polar residues. Basic and acidic residues predominate over residues Gly785–Val799. Composition is skewed to polar residues over residues Met847 to Ala884 and Lys914 to Val926.

This Macaca fascicularis (Crab-eating macaque) protein is Storkhead-box protein 2 (STOX2).